The following is a 332-amino-acid chain: tRNA-dihydrouridine(20/20a) synthase (332 aa).

Residues 22-24 (PMM) and Gln-75 each bind FMN. Cys-105 functions as the Proton donor in the catalytic mechanism. FMN-binding positions include Lys-144, His-177, 217-219 (NGG), and 239-240 (GR).

It belongs to the Dus family. DusA subfamily. The cofactor is FMN.

The catalysed reaction is 5,6-dihydrouridine(20) in tRNA + NADP(+) = uridine(20) in tRNA + NADPH + H(+). The enzyme catalyses 5,6-dihydrouridine(20) in tRNA + NAD(+) = uridine(20) in tRNA + NADH + H(+). It catalyses the reaction 5,6-dihydrouridine(20a) in tRNA + NADP(+) = uridine(20a) in tRNA + NADPH + H(+). It carries out the reaction 5,6-dihydrouridine(20a) in tRNA + NAD(+) = uridine(20a) in tRNA + NADH + H(+). Its function is as follows. Catalyzes the synthesis of 5,6-dihydrouridine (D), a modified base found in the D-loop of most tRNAs, via the reduction of the C5-C6 double bond in target uridines. Specifically modifies U20 and U20a in tRNAs. The sequence is that of tRNA-dihydrouridine(20/20a) synthase from Xylella fastidiosa (strain Temecula1 / ATCC 700964).